Consider the following 100-residue polypeptide: Aspartyl/glutamyl-tRNA(Asn/Gln) amidotransferase subunit C (100 aa).

Belongs to the GatC family. As to quaternary structure, heterotrimer of A, B and C subunits.

It catalyses the reaction L-glutamyl-tRNA(Gln) + L-glutamine + ATP + H2O = L-glutaminyl-tRNA(Gln) + L-glutamate + ADP + phosphate + H(+). The enzyme catalyses L-aspartyl-tRNA(Asn) + L-glutamine + ATP + H2O = L-asparaginyl-tRNA(Asn) + L-glutamate + ADP + phosphate + 2 H(+). Allows the formation of correctly charged Asn-tRNA(Asn) or Gln-tRNA(Gln) through the transamidation of misacylated Asp-tRNA(Asn) or Glu-tRNA(Gln) in organisms which lack either or both of asparaginyl-tRNA or glutaminyl-tRNA synthetases. The reaction takes place in the presence of glutamine and ATP through an activated phospho-Asp-tRNA(Asn) or phospho-Glu-tRNA(Gln). The sequence is that of Aspartyl/glutamyl-tRNA(Asn/Gln) amidotransferase subunit C from Streptococcus pneumoniae (strain P1031).